Here is a 499-residue protein sequence, read N- to C-terminus: Glucose-6-phosphate exchanger SLC37A2 (499 aa).

Residues 21–40 (YRGFIIVMTFLFYTCYHLSR) traverse the membrane as a helical segment. N-linked (GlcNAc...) asparagine glycans are attached at residues Asn-53, Asn-62, and Asn-66. The next 11 membrane-spanning stretches (helical) occupy residues 86–106 (GSLD…SGIF), 116–136 (LSGG…GYYW), 143–163 (YYIL…PAVV), 187–207 (AVGN…AWGL), 208–228 (SFIV…FFLV), 302–322 (LCLL…PLYI), 334–354 (GDLS…AGGI), 362–382 (AITC…YNYF), 391–411 (IAML…ITTA), 434–454 (AIID…AGVL), and 458–478 (GWNY…LLLA).

The protein belongs to the major facilitator superfamily. Organophosphate:Pi antiporter (OPA) (TC 2.A.1.4) family.

The protein localises to the endoplasmic reticulum membrane. The catalysed reaction is D-glucose 6-phosphate(in) + phosphate(out) = D-glucose 6-phosphate(out) + phosphate(in). Its function is as follows. Inorganic phosphate and glucose-6-phosphate antiporter. May transport cytoplasmic glucose-6-phosphate into the lumen of the endoplasmic reticulum and translocate inorganic phosphate into the opposite direction. The polypeptide is Glucose-6-phosphate exchanger SLC37A2 (Xenopus laevis (African clawed frog)).